The primary structure comprises 1303 residues: Latent-transforming growth factor beta-binding protein 3 (1303 aa).

Positions 1 to 43 (MPGPRGAAGGLAPEMRGAGAAGLLALLLLLLLLLLGLGGRVEG) are cleaved as a signal peptide. Residue asparagine 89 is glycosylated (N-linked (GlcNAc...) asparagine). The 33-residue stretch at 109-141 (RVVVCPLPCMNGGQCSSRNQCLCPPDFTGRFCQ) folds into the EGF-like 1 domain. 6 disulfides stabilise this stretch: cysteine 113–cysteine 123, cysteine 117–cysteine 129, cysteine 131–cysteine 140, cysteine 279–cysteine 303, cysteine 289–cysteine 316, and cysteine 304–cysteine 319. The tract at residues 247-282 (SSNAESAAPSQHLLPHPKPSHPRPPTQKPLGRCFQD) is disordered. Residues 277 to 331 (GRCFQDTLPKQPCGSNPLPGLTKQEDCCGSIGTAWGQSKCHKCPQLQYTGVQKPG) form the TB 1 domain. An N-linked (GlcNAc...) asparagine glycan is attached at asparagine 349. The EGF-like 2; calcium-binding domain occupies 355 to 395 (DINECAMPGVCRHGDCLNNPGSYRCVCPPGHSLGPSRTQCI). Disulfide bonds link cysteine 359/cysteine 370, cysteine 365/cysteine 379, cysteine 381/cysteine 394, cysteine 405/cysteine 428, cysteine 415/cysteine 440, cysteine 429/cysteine 443, and cysteine 430/cysteine 455. In terms of domain architecture, TB 2 spans 403-455 (SLCFRLVSPEHQCQHPLTTRLTRQLCCCSVGKAWGARCQRCPTDGTAAFKEIC). The disordered stretch occupies residues 478–552 (FSLFLHPDGP…ISRPSPPTMR (75 aa)). Residues 529 to 540 (PTATTTPARPYP) are compositionally biased toward low complexity. Residues 574–615 (ETDECRLNQNICGHGECVPGPPDYSCHCNPGYRSHPQHRYCV) enclose the EGF-like 3 domain. Intrachain disulfides connect cysteine 578–cysteine 590, cysteine 585–cysteine 599, cysteine 601–cysteine 614, cysteine 620–cysteine 632, cysteine 625–cysteine 641, cysteine 664–cysteine 676, cysteine 670–cysteine 685, cysteine 687–cysteine 701, cysteine 748–cysteine 759, cysteine 754–cysteine 768, cysteine 770–cysteine 783, cysteine 789–cysteine 800, cysteine 795–cysteine 809, cysteine 811–cysteine 824, cysteine 830–cysteine 841, cysteine 836–cysteine 850, cysteine 852–cysteine 864, cysteine 870–cysteine 883, cysteine 877–cysteine 892, cysteine 894–cysteine 907, cysteine 919–cysteine 942, cysteine 929–cysteine 954, cysteine 943–cysteine 959, cysteine 944–cysteine 971, cysteine 997–cysteine 1010, cysteine 1005–cysteine 1019, cysteine 1021–cysteine 1034, cysteine 1040–cysteine 1051, cysteine 1046–cysteine 1060, cysteine 1062–cysteine 1075, cysteine 1086–cysteine 1097, cysteine 1092–cysteine 1106, cysteine 1108–cysteine 1121, cysteine 1138–cysteine 1162, cysteine 1148–cysteine 1174, cysteine 1163–cysteine 1177, and cysteine 1164–cysteine 1186. The region spanning 616–659 (DVNECEAEPCGPGRGICMNTGGSYNCHCNRGYRLHVGAGGRSCV) is the EGF-like 4; calcium-binding domain. Residues 660-702 (DLNECAKPHLCGDGGFCINFPGHYKCNCYPGYRLKASRPPVCE) enclose the EGF-like 5; calcium-binding domain. Residues 744–784 (DVNECAEGSPCSPGWCENLPGSFRCTCAQGYAPAPDGRSCL) form the EGF-like 6; calcium-binding domain. An EGF-like 7; calcium-binding domain is found at 785–825 (DVDECEAGDVCDNGICSNTPGSFQCQCLSGYHLSRDRSHCE). Residues 826 to 865 (DIDECDFPAACIGGDCINTNGSYRCLCPQGHRLVGGRKCQ) enclose the EGF-like 8; calcium-binding domain. N-linked (GlcNAc...) asparagine glycosylation is present at asparagine 845. One can recognise an EGF-like 9; calcium-binding domain in the interval 866–908 (DIDECSQDPSLCLPHGACKNLQGSYVCVCDEGFTPTQDQHGCE). One can recognise a TB 3 domain in the interval 917–971 (KECYLNFDDTVFCDSVLATNVTQQECCCSLGAGWGDHCEIYPCPVYSSAEFHSLC). Residue asparagine 936 is glycosylated (N-linked (GlcNAc...) asparagine). The EGF-like 10; calcium-binding domain maps to 993–1035 (DIDECMLFGSEICKEGKCVNTQPGYECYCKQGFYYDGNLLECV). One can recognise an EGF-like 11; calcium-binding domain in the interval 1036 to 1076 (DVDECLDESNCRNGVCENTRGGYRCACTPPAEYSPAQRQCL). Residues 1082–1122 (DVDECQDPAACRPGRCVNLPGSYRCECRPPWVPGPSGRDCQ) enclose the EGF-like 12; calcium-binding domain. In terms of domain architecture, TB 4 spans 1136–1186 (DVCWSQRGEDGMCAGPLAGPALTFDDCCCRQGRGWGAQCRPCPPRGAGSHC). Residues 1188–1198 (TSQSESNSFWD) are compositionally biased toward polar residues. The disordered stretch occupies residues 1188 to 1219 (TSQSESNSFWDTSPLLLGKPPRDEDSSEEDSD). Residues 1254-1298 (DIDECRELNQRGLLCKSERCVNTSGSFRCVCKAGFARSRPHGACV) enclose the EGF-like 13; calcium-binding domain. Cystine bridges form between cysteine 1258–cysteine 1273 and cysteine 1268–cysteine 1282. A glycan (N-linked (GlcNAc...) asparagine) is linked at asparagine 1275.

The protein belongs to the LTBP family. In terms of assembly, forms part of the large latent transforming growth factor beta precursor complex; removal is essential for activation of complex. Interacts with EFEMP2. Contains hydroxylated asparagine residues. Post-translationally, two intrachain disulfide bonds from the TB3 domain are rearranged upon TGFB1 binding, and form interchain bonds with TGFB1 propeptide, anchoring it to the extracellular matrix. Isoform 2: Expressed prominently in heart, skeletal muscle, prostate, testis, small intestine and ovary. Isoform 1: Strongly expressed in pancreas and liver.

The protein localises to the secreted. The protein resides in the extracellular space. It is found in the extracellular matrix. Key regulator of transforming growth factor beta (TGFB1, TGFB2 and TGFB3) that controls TGF-beta activation by maintaining it in a latent state during storage in extracellular space. Associates specifically via disulfide bonds with the Latency-associated peptide (LAP), which is the regulatory chain of TGF-beta, and regulates integrin-dependent activation of TGF-beta. The sequence is that of Latent-transforming growth factor beta-binding protein 3 (LTBP3) from Homo sapiens (Human).